The primary structure comprises 775 residues: Chondroitin sulfate synthase 2 (775 aa).

The Cytoplasmic segment spans residues 1 to 15 (MRASLLLSVLRPAGP). A helical; Signal-anchor for type II membrane protein transmembrane segment spans residues 16–34 (VAVGISLGFTLSLLSVTWV). The Lumenal portion of the chain corresponds to 35–775 (EEPCGPGPPQ…LFEQEQGNST (741 aa)). The tract at residues 37-100 (PCGPGPPQPG…YHPAQPGQAA (64 aa)) is disordered. Residues 54–66 (GNTNAARRPNSVQ) show a composition bias toward polar residues. 2 N-linked (GlcNAc...) asparagine glycosylation sites follow: asparagine 138 and asparagine 361. A divalent metal cation is bound at residue aspartate 617.

This sequence belongs to the chondroitin N-acetylgalactosaminyltransferase family. In terms of assembly, interacts with PRKN. Mn(2+) is required as a cofactor. It depends on Co(2+) as a cofactor. As to expression, ubiquitous. Highly expressed in pancreas, ovary, brain, heart, skeletal muscle, colon, kidney, liver, stomach, spleen and placenta. In terms of tissue distribution, expressed in brain, spleen, ovary, testis, lung and peripheral mononuclear cells. Also ubiquitous.

The protein resides in the golgi apparatus. It localises to the golgi stack membrane. Its subcellular location is the cytoplasm. It is found in the cytosol. The protein localises to the mitochondrion. The protein resides in the mitochondrion matrix. The catalysed reaction is 3-O-(beta-D-GlcA-(1-&gt;3)-beta-D-GalNAc-(1-&gt;4)-beta-D-GlcA-(1-&gt;3)-beta-D-Gal-(1-&gt;3)-beta-D-Gal-(1-&gt;4)-beta-D-Xyl)-L-seryl-[protein] + UDP-N-acetyl-alpha-D-galactosamine = 3-O-(beta-D-GalNAc-(1-&gt;4)-beta-D-GlcA-(1-&gt;3)-beta-D-GalNAc-(1-&gt;4)-beta-D-GlcA-(1-&gt;3)-beta-D-Gal-(1-&gt;3)-beta-D-Gal-(1-&gt;4)-beta-D-Xyl)-L-seryl-[protein] + UDP + H(+). It carries out the reaction 3-O-{beta-D-GlcA-(1-&gt;3)-[beta-D-GalNAc-(1-&gt;4)-beta-D-GlcA-(1-&gt;3)](n)-beta-D-GalNAc-(1-&gt;4)-beta-D-GlcA-(1-&gt;3)-beta-D-Gal-(1-&gt;3)-beta-D-Gal-(1-&gt;4)-beta-D-Xyl}-L-seryl-[protein] + UDP-N-acetyl-alpha-D-galactosamine = 3-O-{[beta-D-GalNAc-(1-&gt;4)-beta-D-GlcA-(1-&gt;3)](n+1)-beta-D-GalNAc-(1-&gt;4)-beta-D-GlcA-(1-&gt;3)-beta-D-Gal-(1-&gt;3)-beta-D-Gal-(1-&gt;4)-beta-D-Xyl}-L-seryl-[protein] + UDP + H(+). The enzyme catalyses 3-O-(beta-D-GalNAc-(1-&gt;4)-beta-D-GlcA-(1-&gt;3)-beta-D-Gal-(1-&gt;3)-beta-D-Gal-(1-&gt;4)-beta-D-Xyl)-L-seryl-[protein] + UDP-alpha-D-glucuronate = 3-O-(beta-D-GlcA-(1-&gt;3)-beta-D-GalNAc-(1-&gt;4)-beta-D-GlcA-(1-&gt;3)-beta-D-Gal-(1-&gt;3)-beta-D-Gal-(1-&gt;4)-beta-D-Xyl)-L-seryl-[protein] + UDP + H(+). It catalyses the reaction 3-O-{[beta-D-GalNAc-(1-&gt;4)-beta-D-GlcA-(1-&gt;3)](n)-beta-D-GalNAc-(1-&gt;4)-beta-D-GlcA-(1-&gt;3)-beta-D-Gal-(1-&gt;3)-beta-D-Gal-(1-&gt;4)-beta-D-Xyl}-L-seryl-[protein] + UDP-alpha-D-glucuronate = 3-O-{beta-D-GlcA-(1-&gt;3)-[beta-D-GalNAc-(1-&gt;4)-beta-D-GlcA-(1-&gt;3)](n)-beta-D-GalNAc-(1-&gt;4)-beta-D-GlcA-(1-&gt;3)-beta-D-Gal-(1-&gt;3)-beta-D-Gal-(1-&gt;4)-beta-D-Xyl}-L-seryl-[protein] + UDP + H(+). Has both beta-1,3-glucuronic acid and beta-1,4-N-acetylgalactosamine transferase activity. Transfers glucuronic acid (GlcUA) from UDP-GlcUA and N-acetylgalactosamine (GalNAc) from UDP-GalNAc to the non-reducing end of the elongating chondroitin polymer. Seems to act as a specific activating factor for CHSY1 in chondroitin polymerization. Functionally, may facilitate PRKN transport into the mitochondria. In collaboration with PRKN, may enhance cell viability and protect cells from oxidative stress. The chain is Chondroitin sulfate synthase 2 from Homo sapiens (Human).